A 101-amino-acid polypeptide reads, in one-letter code: Phosphoprotein OPG062 (101 aa).

The disordered stretch occupies residues 51 to 73; the sequence is PSSPACERRPSSPSRCERMNNPG. Phosphoserine occurs at positions 53 and 62. A compositionally biased stretch (basic and acidic residues) spans 56–68; it reads CERRPSSPSRCER.

Belongs to the orthopoxvirus OPG062 family. Self-associates to form high molecular-weight forms. Interacts with protein OPG157. Interacts with host RICTOR and RPTOR; these interactions disrupt the mTORC1 and mTORC2 crosstalk. In terms of processing, phosphorylated on two serines. While these phosphorylations do not play a role in virion assembly; they are essential for the interaction with host RICTOR and RPTOR.

The protein resides in the virion. Plays an essential role in virion assembly and morphogenesis. Also plays a role in the inhibition of host immune response by dysregulating mTOR. Sequesters host RICTOR and RPTOR, thereby disrupting mTORC1 and mTORC2 crosstalk. In turn, blocks the host antiviral response in part through mTOR-dependent degradation of cGAS, the primary poxvirus sensor. In Homo sapiens (Human), this protein is Phosphoprotein OPG062 (OPG062).